The chain runs to 352 residues: 3-dehydroquinate synthase (352 aa).

Residues 60 to 65 (DGEGAK), 118 to 119 (TT), Lys131, Lys140, and 158 to 161 (FLET) each bind NAD(+). Positions 173, 237, and 253 each coordinate Zn(2+).

It belongs to the sugar phosphate cyclases superfamily. Dehydroquinate synthase family. Requires NAD(+) as cofactor. It depends on Co(2+) as a cofactor. The cofactor is Zn(2+).

Its subcellular location is the cytoplasm. It carries out the reaction 7-phospho-2-dehydro-3-deoxy-D-arabino-heptonate = 3-dehydroquinate + phosphate. The protein operates within metabolic intermediate biosynthesis; chorismate biosynthesis; chorismate from D-erythrose 4-phosphate and phosphoenolpyruvate: step 2/7. Functionally, catalyzes the conversion of 3-deoxy-D-arabino-heptulosonate 7-phosphate (DAHP) to dehydroquinate (DHQ). This chain is 3-dehydroquinate synthase, found in Sulfurisphaera tokodaii (strain DSM 16993 / JCM 10545 / NBRC 100140 / 7) (Sulfolobus tokodaii).